The primary structure comprises 1823 residues: Laminin subunit alpha-4 (1823 aa).

Positions 1–24 (MALSSAWRSVLPLWLLWSAACSRA) are cleaved as a signal peptide. Ser-39 carries O-linked (Xyl...) (chondroitin sulfate) serine glycosylation. Cystine bridges form between Cys-82–Cys-91, Cys-84–Cys-98, Cys-101–Cys-110, Cys-113–Cys-129, Cys-132–Cys-146, Cys-134–Cys-155, Cys-157–Cys-166, Cys-169–Cys-184, Cys-187–Cys-202, Cys-189–Cys-209, Cys-212–Cys-221, and Cys-224–Cys-238. Laminin EGF-like domains are found at residues 82–131 (CDCN…FCQP), 132–186 (CPCP…TCKK), and 187–240 (CDCS…NCAV). Residue Asn-104 is glycosylated (N-linked (GlcNAc...) asparagine). Residue Asn-215 is glycosylated (N-linked (GlcNAc...) asparagine). The 15-residue stretch at 241–255 (CNCGGGPCDSVTGEC) folds into the Laminin EGF-like 4; truncated domain. Positions 256–832 (LEEGFEPPTG…AQTRSVASKI (577 aa)) are domain II and I. Asn-315 is a glycosylation site (N-linked (GlcNAc...) asparagine). The stretch at 320-403 (LLKTKLSERE…KIQEINNKML (84 aa)) forms a coiled coil. Asn-465 is a glycosylation site (N-linked (GlcNAc...) asparagine). Residues 473-528 (VVLEQLDDYNAKLSDLQEALDQALNYVRDAEDMNRATAARQRDHEKQQERVREQME) adopt a coiled-coil conformation. N-linked (GlcNAc...) asparagine glycosylation is found at Asn-531, Asn-557, Asn-578, Asn-581, Asn-638, and Asn-646. Residues 581–614 (NLSHDLVQEAIDHAQDLQQEANELSRKLHSSDMN) adopt a coiled-coil conformation. Residues 662-724 (IIYHKDESEN…AVKQLQAAER (63 aa)) adopt a coiled-coil conformation. The short motif at 724-726 (RGD) is the Cell attachment site element. 5 N-linked (GlcNAc...) asparagine glycosylation sites follow: Asn-742, Asn-758, Asn-761, Asn-787, and Asn-810. Positions 777-806 (AVNSARDAVRNLTEVVPQLLDQLRTVEQKR) form a coiled coil. Laminin G-like domains follow at residues 833-1035 (QVSM…SVPC), 1047-1227 (AASY…GYGC), and 1234-1402 (SRRA…LYEC). Cys-1005 and Cys-1035 form a disulfide bridge. Residue Asn-1093 is glycosylated (N-linked (GlcNAc...) asparagine). A disulfide bond links Cys-1201 and Cys-1227. N-linked (GlcNAc...) asparagine glycans are attached at residues Asn-1288 and Asn-1366. A disulfide bridge links Cys-1370 with Cys-1402. Asn-1418 is a glycosylation site (N-linked (GlcNAc...) asparagine). Positions 1419-1440 (LSKPKASQNKKGGKSKDAPSWD) are disordered. Laminin G-like domains lie at 1469 to 1640 (AYQY…VTPC) and 1647 to 1820 (TGTY…INSC). Intrachain disulfides connect Cys-1617–Cys-1640 and Cys-1792–Cys-1820.

In terms of assembly, laminin is a complex glycoprotein, consisting of three different polypeptide chains (alpha, beta, gamma), which are bound to each other by disulfide bonds into a cross-shaped molecule comprising one long and three short arms with globules at each end. Alpha-4 is a subunit of laminin-8 (laminin-411), laminin-9 (laminin-421) and laminin-14 (laminin-423). As to expression, detected in placenta (at protein level). Detected in fibroblasts and urine (at protein level). In adult, strong expression in heart, lung, ovary small and large intestines, placenta, liver; weak or no expression in skeletal muscle, kidney, pancreas, testis, prostate, brain. High expression in fetal lung and kidney. Expression in fetal and newborn tissues is observed in certain mesenchymal cells in tissues such as smooth muscle and dermis.

The protein localises to the secreted. It is found in the extracellular space. It localises to the extracellular matrix. The protein resides in the basement membrane. Its function is as follows. Binding to cells via a high affinity receptor, laminin is thought to mediate the attachment, migration and organization of cells into tissues during embryonic development by interacting with other extracellular matrix components. The chain is Laminin subunit alpha-4 (LAMA4) from Homo sapiens (Human).